The following is a 192-amino-acid chain: Protein GrpE (192 aa).

A disordered region spans residues 1–34 (MSSKEQKTPNEQVSEEMENTAEQQVEATQETGEC). Positions 20-31 (TAEQQVEATQET) are enriched in polar residues.

The protein belongs to the GrpE family. Homodimer.

It localises to the cytoplasm. In terms of biological role, participates actively in the response to hyperosmotic and heat shock by preventing the aggregation of stress-denatured proteins, in association with DnaK and GrpE. It is the nucleotide exchange factor for DnaK and may function as a thermosensor. Unfolded proteins bind initially to DnaJ; upon interaction with the DnaJ-bound protein, DnaK hydrolyzes its bound ATP, resulting in the formation of a stable complex. GrpE releases ADP from DnaK; ATP binding to DnaK triggers the release of the substrate protein, thus completing the reaction cycle. Several rounds of ATP-dependent interactions between DnaJ, DnaK and GrpE are required for fully efficient folding. The protein is Protein GrpE of Yersinia pestis.